The sequence spans 129 residues: L-ectoine synthase (129 aa).

Belongs to the ectoine synthase family.

It carries out the reaction (2S)-4-acetamido-2-aminobutanoate = L-ectoine + H2O. Its pathway is amine and polyamine biosynthesis; ectoine biosynthesis; L-ectoine from L-aspartate 4-semialdehyde: step 3/3. Catalyzes the circularization of gamma-N-acetyl-alpha,gamma-diaminobutyric acid (ADABA) to ectoine (1,4,5,6-tetrahydro-2-methyl-4-pyrimidine carboxylic acid), which is an excellent osmoprotectant. This chain is L-ectoine synthase, found in Desulfosudis oleivorans (strain DSM 6200 / JCM 39069 / Hxd3) (Desulfococcus oleovorans).